The following is a 436-amino-acid chain: 3-ketoacyl-CoA thiolase (436 aa).

The active-site Acyl-thioester intermediate is Cys-99. Active-site proton acceptor residues include His-392 and Cys-422.

The protein belongs to the thiolase-like superfamily. Thiolase family. In terms of assembly, heterotetramer of two alpha chains (FadJ) and two beta chains (FadI).

It is found in the cytoplasm. It catalyses the reaction an acyl-CoA + acetyl-CoA = a 3-oxoacyl-CoA + CoA. It functions in the pathway lipid metabolism; fatty acid beta-oxidation. Functionally, catalyzes the final step of fatty acid oxidation in which acetyl-CoA is released and the CoA ester of a fatty acid two carbons shorter is formed. This is 3-ketoacyl-CoA thiolase from Shewanella woodyi (strain ATCC 51908 / MS32).